Reading from the N-terminus, the 418-residue chain is Gamma-glutamyl phosphate reductase (418 aa).

This sequence belongs to the gamma-glutamyl phosphate reductase family.

The protein resides in the cytoplasm. The catalysed reaction is L-glutamate 5-semialdehyde + phosphate + NADP(+) = L-glutamyl 5-phosphate + NADPH + H(+). The protein operates within amino-acid biosynthesis; L-proline biosynthesis; L-glutamate 5-semialdehyde from L-glutamate: step 2/2. Catalyzes the NADPH-dependent reduction of L-glutamate 5-phosphate into L-glutamate 5-semialdehyde and phosphate. The product spontaneously undergoes cyclization to form 1-pyrroline-5-carboxylate. In Pelodictyon phaeoclathratiforme (strain DSM 5477 / BU-1), this protein is Gamma-glutamyl phosphate reductase.